Here is a 346-residue protein sequence, read N- to C-terminus: Cobalt transport protein CbiM (346 aa).

An N-terminal signal peptide occupies residues 1-25 (MKRITLYAAGSAIIGAMLLAGPAHA). 8 helical membrane-spanning segments follow: residues 31 to 51 (GILPLGWAALWFAVAAPFLAL), 68 to 88 (PLVGLMAAVVFIISCMPIPVP), 101 to 121 (IAAILVGPLVSVVITTVALLI), 133 to 153 (TLGADVVSMGVAGSFAGWFVF), 159 to 179 (LGAGLAVAAFVAGLLADWATY), 196 to 216 (FYPLFLKIVAAFVPTQLPLGV), 255 to 275 (ATVVMLALFCLLASLLVAGPS), and 312 to 332 (LLLFVFLLAGTVGGFAAGYFW).

It belongs to the CbiM family. Forms an energy-coupling factor (ECF) transporter complex composed of an ATP-binding protein (A component, CbiO), a transmembrane protein (T component, CbiQ) and 2 possible substrate-capture proteins (S components, CbiM and CbiN) of unknown stoichimetry.

The protein localises to the cell inner membrane. It functions in the pathway cofactor biosynthesis; adenosylcobalamin biosynthesis. Part of the energy-coupling factor (ECF) transporter complex CbiMNOQ involved in cobalt import. The sequence is that of Cobalt transport protein CbiM from Geobacter sulfurreducens (strain ATCC 51573 / DSM 12127 / PCA).